Here is a 47-residue protein sequence, read N- to C-terminus: MKKVPLNCEVCGNRNYNVPKQSNLASRLELKKYCPRCNAHTLHKESK.

Belongs to the bacterial ribosomal protein bL33 family.

This is Large ribosomal subunit protein bL33 from Staphylococcus saprophyticus.